A 63-amino-acid chain; its full sequence is Defensin-like protein 278 (63 aa).

An N-terminal signal peptide occupies residues 1 to 15 (MSLVYMYMYIGVVMS). Cystine bridges form between C31/C48, C37/C53, and C41/C55.

The protein belongs to the DEFL family.

Its subcellular location is the secreted. This chain is Defensin-like protein 278, found in Arabidopsis thaliana (Mouse-ear cress).